The sequence spans 172 residues: Translocon-associated protein subunit delta (172 aa).

Residues 1 to 23 (MAAMASFGALALLLLSGLSCCSE) form the signal peptide. At 24–143 (ACLEPQITPS…SVDHRGTWNG (120 aa)) the chain is on the lumenal side. The cysteines at positions 25 and 56 are disulfide-linked. Residue Lys72 forms a Glycyl lysine isopeptide (Lys-Gly) (interchain with G-Cter in ubiquitin) linkage. A helical membrane pass occupies residues 144 to 164 (PWVSTEVLAAVIGIVIYYLAF). Residues 165–172 (SAKSHIQA) lie on the Cytoplasmic side of the membrane.

Belongs to the TRAP-delta family. Heterotetramer of TRAP-alpha, TRAP-beta, TRAP-delta and TRAP-gamma.

It is found in the endoplasmic reticulum membrane. Functionally, TRAP proteins are part of a complex whose function is to bind calcium to the ER membrane and thereby regulate the retention of ER resident proteins. The protein is Translocon-associated protein subunit delta (Ssr4) of Mus musculus (Mouse).